The chain runs to 1687 residues: Vitellogenin-2 (1687 aa).

An N-terminal signal peptide occupies residues 1–15 (MRVLVLALTVALVAG). The Vitellogenin domain maps to 24 to 663 (FAPGKTYEYK…DAATVLPKNI (640 aa)). N-linked (GlcNAc...) asparagine glycosylation is found at Asn941, Asn945, Asn954, Asn1004, Asn1019, and Asn1083. The interval 1081–1174 (LKNSTKASSS…SSSSSKTKWQ (94 aa)) is disordered. Residues 1088-1127 (SSSSSGSSRSSRSRSSSSSSSSSSSSSSRSSSSSSRSSSS) are compositionally biased toward low complexity. An N-linked (GlcNAc...) asparagine glycan is attached at Asn1142. Residues 1148-1169 (SSSSSSSSSSSSSSSSSSSSSS) show a composition bias toward low complexity. N-linked (GlcNAc...) asparagine glycans are attached at residues Asn1179, Asn1257, Asn1292, Asn1342, Asn1361, Asn1366, and Asn1390. Residues 1417-1593 (AECTVVEDTV…SWVLPAKSCR (177 aa)) enclose the VWFD domain. 2 disulfides stabilise this stretch: Cys1419/Cys1556 and Cys1442/Cys1592. Residues Asn1577 and Asn1655 are each glycosylated (N-linked (GlcNAc...) asparagine).

Phosvitin, an egg yolk storage protein, is one of the most highly phosphorylated (10%) proteins in nature. As to expression, produced by the liver, secreted into the blood and then sequestered by receptor mediated endocytosis into growing oocytes, where it is generally cleaved, giving rise to the respective yolk components lipovitellins and phosvitin.

Precursor of the egg-yolk proteins that are sources of nutrients during early development of oviparous organisms. This Fundulus heteroclitus (Killifish) protein is Vitellogenin-2.